The following is a 150-amino-acid chain: MLLNWQGRHFMEINHSRITSYEIADYMIRTKSLLSAKELAAILEKEYPHLDVDKRDVYLRLKAIAVSKYSSVLIDDSTRPRRFQIHSLNPEFFRRSRAPRRFDEKLQNELYMTQDEKERREHQPWVMARQLFNKVARQHRHYGNATSARI.

In terms of biological role, trans-activating factor involved in the late regulation of the P1 lytic growth cycle. May be the transcriptional activator of all late P1 functions. This is Late promoter-activating protein (lpa) from Escherichia phage P1 (Bacteriophage P1).